A 210-amino-acid chain; its full sequence is Large ribosomal subunit protein bL25 (210 aa).

This sequence belongs to the bacterial ribosomal protein bL25 family. CTC subfamily. As to quaternary structure, part of the 50S ribosomal subunit; part of the 5S rRNA/L5/L18/L25 subcomplex. Contacts the 5S rRNA. Binds to the 5S rRNA independently of L5 and L18.

This is one of the proteins that binds to the 5S RNA in the ribosome where it forms part of the central protuberance. This is Large ribosomal subunit protein bL25 from Frankia casuarinae (strain DSM 45818 / CECT 9043 / HFP020203 / CcI3).